The sequence spans 289 residues: Splicing factor C9orf78 homolog (289 aa).

The span at 1–12 (MPVVRKIFRRRR) shows a compositional bias: basic residues. Disordered stretches follow at residues 1 to 27 (MPVVRKIFRRRRGDSESEEDEQDSEEV) and 86 to 109 (GKDKISEEEDLHLGTSFSAETNRR). The interaction with SNRNP200 stretch occupies residues 5–58 (RKIFRRRRGDSESEEDEQDSEEVRLKLEETREVQNLRKRPNGVSAVALLVGEKV). Residues serine 15 and serine 17 each carry the phosphoserine modification. At tyrosine 147 the chain carries Phosphotyrosine. Basic and acidic residues predominate over residues 232–283 (LNAPIRRNKEEPKARPLRVGDTEKPEPERSPPNRKRPANEKATDDYHYEKFK). The disordered stretch occupies residues 232–289 (LNAPIRRNKEEPKARPLRVGDTEKPEPERSPPNRKRPANEKATDDYHYEKFKKMNRRY). At threonine 253 the chain carries Phosphothreonine. Serine 261 is subject to Phosphoserine.

Belongs to the TLS1 family. As to quaternary structure, component of the spliceosome. Interacts with SNRNP200; the interaction is direct. Interacts with PRPF8.

It localises to the nucleus. Its subcellular location is the chromosome. It is found in the centromere. Functionally, plays a role in pre-mRNA splicing by promoting usage of the upstream 3'-splice site at alternative NAGNAG splice sites; these are sites featuring alternative acceptor motifs separated by only a few nucleotides. May also modulate exon inclusion events. Plays a role in spliceosomal remodeling by displacing WBP4 from SNRNP200 and may act to inhibit SNRNP200 helicase activity. Binds U5 snRNA. Required for proper chromosome segregation. Not required for splicing of shelterin components. This is Splicing factor C9orf78 homolog from Pongo abelii (Sumatran orangutan).